The following is a 127-amino-acid chain: Probable 4-amino-4-deoxy-L-arabinose-phosphoundecaprenol flippase subunit ArnF (127 aa).

Topologically, residues 1–2 are cytoplasmic; it reads MG. A helical transmembrane segment spans residues 3-23; that stretch reads LLFALGSVVLVSAAQLLLKWA. Residues 24-47 are Periplasmic-facing; that stretch reads MIQLPDISQLPQFLSSLSQFPLPT. The helical transmembrane segment at 48-68 threads the bilayer; it reads AALFLGLLAYALSMLCWLLAL. The Cytoplasmic segment spans residues 69–76; it reads KRLPLSRA. The chain crosses the membrane as a helical span at residues 77–97; that stretch reads YPLLSLSYLLVWLAALWLPGL. Residues 98–102 lie on the Periplasmic side of the membrane; that stretch reads NEVFR. Residues 103-123 traverse the membrane as a helical segment; sequence WGKLAGAGLIVSGLLLICWPA. At 124–127 the chain is on the cytoplasmic side; it reads AKTR.

This sequence belongs to the ArnF family. As to quaternary structure, heterodimer of ArnE and ArnF.

The protein resides in the cell inner membrane. Its pathway is bacterial outer membrane biogenesis; lipopolysaccharide biosynthesis. Functionally, translocates 4-amino-4-deoxy-L-arabinose-phosphoundecaprenol (alpha-L-Ara4N-phosphoundecaprenol) from the cytoplasmic to the periplasmic side of the inner membrane. In Erwinia tasmaniensis (strain DSM 17950 / CFBP 7177 / CIP 109463 / NCPPB 4357 / Et1/99), this protein is Probable 4-amino-4-deoxy-L-arabinose-phosphoundecaprenol flippase subunit ArnF.